The chain runs to 347 residues: Endophilin-A3 (347 aa).

A membrane-binding amphipathic helix region spans residues Met1–Ile21. The 232-residue stretch at Ser18 to Ser249 folds into the BAR domain. The required for dimerization upon membrane association stretch occupies residues Pro60 to Pro87. Residues Glu181–Met201 adopt a coiled-coil conformation. Residues Phe218–Glu254 form an interaction with ARC region. The disordered stretch occupies residues Ser248–Ser271. Ser265 bears the Phosphoserine mark. Residues Met285–Pro344 form the SH3 domain.

It belongs to the endophilin family. In terms of assembly, interacts with ARC. Interacts with DNM1, SGIP1 and SYNJ1. Interacts with the huntingtin exon 1 protein (HDEX1P) containing a glutamine repeat in the pathological range and promotes formation of insoluble polyglutamine-containing aggregates in vivo. Interacts with DYDC1. Interacts with FASLG. Interacts with ATXN2. Interacts with BIN2. In terms of tissue distribution, brain and testis.

It is found in the cytoplasm. The protein resides in the early endosome membrane. In terms of biological role, implicated in endocytosis. May recruit other proteins to membranes with high curvature. In Homo sapiens (Human), this protein is Endophilin-A3 (SH3GL3).